Here is a 166-residue protein sequence, read N- to C-terminus: Regulatory protein RecX (166 aa).

Belongs to the RecX family.

The protein resides in the cytoplasm. Modulates RecA activity. The chain is Regulatory protein RecX from Salmonella newport (strain SL254).